We begin with the raw amino-acid sequence, 299 residues long: Coenzyme PQQ synthesis protein B (299 aa).

It belongs to the PqqB family.

It participates in cofactor biosynthesis; pyrroloquinoline quinone biosynthesis. Functionally, may be involved in the transport of PQQ or its precursor to the periplasm. This is Coenzyme PQQ synthesis protein B from Methylorubrum extorquens (strain ATCC 14718 / DSM 1338 / JCM 2805 / NCIMB 9133 / AM1) (Methylobacterium extorquens).